We begin with the raw amino-acid sequence, 141 residues long: ATP synthase epsilon chain (141 aa).

This sequence belongs to the ATPase epsilon chain family. In terms of assembly, F-type ATPases have 2 components, CF(1) - the catalytic core - and CF(0) - the membrane proton channel. CF(1) has five subunits: alpha(3), beta(3), gamma(1), delta(1), epsilon(1). CF(0) has three main subunits: a, b and c.

It is found in the cell membrane. Functionally, produces ATP from ADP in the presence of a proton gradient across the membrane. This is ATP synthase epsilon chain from Lactococcus lactis subsp. cremoris (strain MG1363).